A 337-amino-acid chain; its full sequence is Transaldolase (337 aa).

Residues 1–10 (MSGSPVKRQR) carry the Nuclear localization signal motif. N6-acetyllysine is present on K115. K142 acts as the Schiff-base intermediate with substrate in catalysis. K219 is subject to N6-acetyllysine. A phosphoserine mark is found at S237 and S256. An N6-acetyllysine mark is found at K269, K286, and K321.

Belongs to the transaldolase family. Type 1 subfamily. As to quaternary structure, homodimer. Interacts with KPNA1 and KPNA4.

The protein localises to the nucleus. It is found in the cytoplasm. It carries out the reaction D-sedoheptulose 7-phosphate + D-glyceraldehyde 3-phosphate = D-erythrose 4-phosphate + beta-D-fructose 6-phosphate. It functions in the pathway carbohydrate degradation; pentose phosphate pathway; D-glyceraldehyde 3-phosphate and beta-D-fructose 6-phosphate from D-ribose 5-phosphate and D-xylulose 5-phosphate (non-oxidative stage): step 2/3. Catalyzes the rate-limiting step of the non-oxidative phase in the pentose phosphate pathway. Catalyzes the reversible conversion of sedheptulose-7-phosphate and D-glyceraldehyde 3-phosphate into erythrose-4-phosphate and beta-D-fructose 6-phosphate. The protein is Transaldolase (TALDO1) of Cricetulus griseus (Chinese hamster).